The primary structure comprises 682 residues: Potassium-transporting ATPase ATP-binding subunit (682 aa).

Transmembrane regions (helical) follow at residues 15 to 35 (AALF…AKLA), 42 to 62 (SPVM…TASG), 66 to 86 (AGFG…GNFA), 233 to 253 (LTFL…GVTL), and 257 to 277 (LLIA…LPAI). Aspartate 310 functions as the 4-aspartylphosphate intermediate in the catalytic mechanism. Residues aspartate 347, glutamate 351, 377-384 (FTAQTRMS), and lysine 395 contribute to the ATP site. Aspartate 518 and aspartate 522 together coordinate Mg(2+). 3 helical membrane passes run 588-608 (FAIL…LNVM), 616-636 (AVLA…PLAL), and 662-682 (VLLP…VLGA).

This sequence belongs to the cation transport ATPase (P-type) (TC 3.A.3) family. Type IA subfamily. In terms of assembly, the system is composed of three essential subunits: KdpA, KdpB and KdpC.

It localises to the cell inner membrane. It catalyses the reaction K(+)(out) + ATP + H2O = K(+)(in) + ADP + phosphate + H(+). In terms of biological role, part of the high-affinity ATP-driven potassium transport (or Kdp) system, which catalyzes the hydrolysis of ATP coupled with the electrogenic transport of potassium into the cytoplasm. This subunit is responsible for energy coupling to the transport system and for the release of the potassium ions to the cytoplasm. The protein is Potassium-transporting ATPase ATP-binding subunit of Xanthomonas axonopodis pv. citri (strain 306).